The following is a 407-amino-acid chain: Imidazolonepropionase (407 aa).

H75 and H77 together coordinate Fe(3+). Residues H75 and H77 each contribute to the Zn(2+) site. Positions 84, 142, and 169 each coordinate 4-imidazolone-5-propanoate. Y142 serves as a coordination point for N-formimidoyl-L-glutamate. H232 is a Fe(3+) binding site. Residue H232 coordinates Zn(2+). Q235 is a binding site for 4-imidazolone-5-propanoate. Residue D306 participates in Fe(3+) binding. D306 provides a ligand contact to Zn(2+). The N-formimidoyl-L-glutamate site is built by N308 and G310. Residue T311 coordinates 4-imidazolone-5-propanoate.

It belongs to the metallo-dependent hydrolases superfamily. HutI family. The cofactor is Zn(2+). Fe(3+) serves as cofactor.

Its subcellular location is the cytoplasm. The catalysed reaction is 4-imidazolone-5-propanoate + H2O = N-formimidoyl-L-glutamate. It participates in amino-acid degradation; L-histidine degradation into L-glutamate; N-formimidoyl-L-glutamate from L-histidine: step 3/3. Catalyzes the hydrolytic cleavage of the carbon-nitrogen bond in imidazolone-5-propanoate to yield N-formimidoyl-L-glutamate. It is the third step in the universal histidine degradation pathway. The chain is Imidazolonepropionase from Rhodococcus jostii (strain RHA1).